Consider the following 110-residue polypeptide: UPF0213 protein DVU_3309 (110 aa).

Positions 8 to 83 constitute a GIY-YIG domain; the sequence is EVWFVYLLRC…KRQPTDQKLA (76 aa).

The protein belongs to the UPF0213 family.

This is UPF0213 protein DVU_3309 from Nitratidesulfovibrio vulgaris (strain ATCC 29579 / DSM 644 / CCUG 34227 / NCIMB 8303 / VKM B-1760 / Hildenborough) (Desulfovibrio vulgaris).